Reading from the N-terminus, the 150-residue chain is Ribosomal RNA large subunit methyltransferase H (150 aa).

S-adenosyl-L-methionine is bound by residues Ala-100 and 118–123 (LSEMTF).

It belongs to the RNA methyltransferase RlmH family. Homodimer.

Its subcellular location is the cytoplasm. The catalysed reaction is pseudouridine(1915) in 23S rRNA + S-adenosyl-L-methionine = N(3)-methylpseudouridine(1915) in 23S rRNA + S-adenosyl-L-homocysteine + H(+). Specifically methylates the pseudouridine at position 1915 (m3Psi1915) in 23S rRNA. In Helicobacter pylori (strain ATCC 700392 / 26695) (Campylobacter pylori), this protein is Ribosomal RNA large subunit methyltransferase H.